The chain runs to 427 residues: Serine protease inhibitor 88Ea (427 aa).

The N-terminal stretch at 1–18 is a signal peptide; that stretch reads MHILSISLMAVLPAIALA. N-linked (GlcNAc...) asparagine glycosylation is present at N224.

It belongs to the serpin family. Expressed in nurse cells and oocytes. Expressed in wings.

It localises to the secreted. Serine protease inhibitor with activity toward trypsin. Negatively regulates the Toll signaling pathway and suppresses the expression of the antifungal peptide drosomycin. Its negative regulation of the Toll signaling pathway also results in the inhibition of the melanization immune response via the phenoloxidase (PPO1) cascade. Essential for unfolding and expansion of the wings after emergence from the pupal case. May regulate the Toll pathway by blocking the proteolysis of the Toll ligand spz. In Drosophila melanogaster (Fruit fly), this protein is Serine protease inhibitor 88Ea.